The chain runs to 316 residues: Ribosomal RNA small subunit methyltransferase H (316 aa).

S-adenosyl-L-methionine is bound by residues 35-37 (SGH), aspartate 55, phenylalanine 84, aspartate 105, and glutamine 112.

Belongs to the methyltransferase superfamily. RsmH family.

Its subcellular location is the cytoplasm. It carries out the reaction cytidine(1402) in 16S rRNA + S-adenosyl-L-methionine = N(4)-methylcytidine(1402) in 16S rRNA + S-adenosyl-L-homocysteine + H(+). Functionally, specifically methylates the N4 position of cytidine in position 1402 (C1402) of 16S rRNA. The chain is Ribosomal RNA small subunit methyltransferase H from Streptococcus pyogenes serotype M18 (strain MGAS8232).